A 513-amino-acid polypeptide reads, in one-letter code: Probable vesicular acetylcholine transporter-A (513 aa).

The Cytoplasmic segment spans residues 1–39; that stretch reads MATEESGGLAQTAAVKLSEMGERTKQLGNAIQDPERQRR. A helical transmembrane segment spans residues 40–60; it reads IILVIVCVALLLDNMLYMVIV. Topologically, residues 61-98 are lumenal, vesicle; that stretch reads PIVPDYLAHLESESEQAHVKGNSSINITQNENFDLQIG. 2 N-linked (GlcNAc...) asparagine glycosylation sites follow: N82 and N86. A helical transmembrane segment spans residues 99 to 119; it reads VLFASKAILQLLVNPLTGTFI. Residues 120–125 are Cytoplasmic-facing; the sequence is DRVGYD. Residues 126–146 form a helical membrane-spanning segment; that stretch reads IPLLIGLSIMFVSTCIFAFAE. Topologically, residues 147–156 are lumenal, vesicle; the sequence is NYATLFMARS. The chain crosses the membrane as a helical span at residues 157 to 174; that stretch reads LQGLGSAFADTSGIAMIA. At 175 to 186 the chain is on the cytoplasmic side; that stretch reads DKYAEESERSRA. The helical transmembrane segment at 187-207 threads the bilayer; the sequence is LGIALAFISFGSLAAPPFGGV. At 208-215 the chain is on the lumenal, vesicle side; sequence LYEFAGKR. The helical transmembrane segment at 216–236 threads the bilayer; it reads FPFIALACVCLADGILCLTVL. The Cytoplasmic segment spans residues 237–257; that stretch reads KPFSSRTRENMPVGTPIYKLM. A helical membrane pass occupies residues 258-278; it reads IDPYIAVVAGALTTCNIPLAF. Over 279–296 the chain is Lumenal, vesicle; the sequence is LEPTIANWMEETMNASQW. N292 carries an N-linked (GlcNAc...) asparagine glycan. The chain crosses the membrane as a helical span at residues 297-317; sequence QIGITWLPAFFPHILGVYLTV. Over 318 to 327 the chain is Cytoplasmic; sequence KLAAKYPHLQ. The helical transmembrane segment at 328–348 threads the bilayer; that stretch reads WFYGALGMVIIGASSCIVPAC. Over 349 to 353 the chain is Lumenal, vesicle; that stretch reads KNFEQ. A helical membrane pass occupies residues 354–374; that stretch reads LIIPLCGVCFGIALVDTALLP. The Cytoplasmic segment spans residues 375 to 390; it reads TLAFLVDVRHVSVYGS. Residues 391-411 form a helical membrane-spanning segment; that stretch reads VYAIADISYCVAYALGPIVAG. At 412–418 the chain is on the lumenal, vesicle side; it reads KIVHDLG. Residues 419 to 439 traverse the membrane as a helical segment; it reads FVQLNLGMGLANVLYAPALLL. Residues 440-513 are Cytoplasmic-facing; sequence LRNVSLMKPS…EEETSEPEYI (74 aa). Positions 475 to 513 are disordered; sequence RKKHGYSSSGNCVPIDENGTFAGQSKSFSEEETSEPEYI. Over residues 504–513 the composition is skewed to acidic residues; the sequence is EEETSEPEYI.

This sequence belongs to the major facilitator superfamily. Vesicular transporter family.

The protein resides in the membrane. In terms of biological role, involved in acetylcholine transport into synaptic vesicles. This Danio rerio (Zebrafish) protein is Probable vesicular acetylcholine transporter-A.